Consider the following 602-residue polypeptide: Leucine-rich repeat-containing protein 40 (602 aa).

The disordered stretch occupies residues Met-1–Asp-22. Phosphoserine is present on Ser-71. LRR repeat units follow at residues Asp-83 to Leu-104, Ala-106 to Leu-127, Asn-129 to Leu-150, Asn-152 to Phe-173, Asn-175 to Leu-196, Ser-198 to Met-219, Arg-221 to Met-242, Ser-244 to Ser-265, Leu-266 to Lys-286, Ser-290 to Leu-311, Ser-313 to His-335, Leu-336 to Lys-356, Thr-400 to Ala-421, Ile-426 to Leu-447, Met-450 to Gln-472, Lys-473 to Leu-494, Arg-496 to Ile-517, Thr-519 to Met-540, Asn-543 to Cys-564, and Asn-566 to Met-586.

The chain is Leucine-rich repeat-containing protein 40 (LRRC40) from Pongo abelii (Sumatran orangutan).